A 666-amino-acid chain; its full sequence is Spartin (666 aa).

An N-acetylmethionine modification is found at methionine 1. Residues 16 to 94 enclose the MIT domain; it reads IREAYKKAFL…LQNVRTRLEI (79 aa). A disordered region spans residues 124–156; that stretch reads EKLPEPQSFSSAPQHAEVNGNTSTPSAGAVAAP. Residues 146–156 show a composition bias toward low complexity; it reads STPSAGAVAAP. Positions 190-380 are ubiquitin-binding region (UBR) domain; the sequence is DSGEFSSVGE…QLDQGNKDVR (191 aa). The short motif at 193–200 is the LC3-interacting region (LIR); mediates interaction with MAP1LC3A AND MAP1LC3C element; the sequence is EFSSVGEE. The interval 344 to 398 is disordered; that stretch reads EENEFQIPGRTRPSSDQLKEASGTDVKQLDQGNKDVRHKGKRGKRAKDTSSEEVN. A Glycyl lysine isopeptide (Lys-Gly) (interchain with G-Cter in ubiquitin) cross-link involves residue lysine 362. Over residues 379 to 388 the composition is skewed to basic residues; it reads VRHKGKRGKR. The Senescence domain maps to 427–611; the sequence is ILSGASWVSW…YNINNIGIKA (185 aa). The interval 431–503 is required for localization to lipid droplets; that stretch reads ASWVSWGLVK…LVDGVCTVAN (73 aa). Residue serine 470 is modified to Phosphoserine. The segment at 636-666 is disordered; sequence RENQEGAANVNVRGEKDEQTKEVKEAKKKDK. Over residues 648 to 666 the composition is skewed to basic and acidic residues; it reads RGEKDEQTKEVKEAKKKDK.

Interacts with ITCH and WWP1. Interacts (via MIT domain) with IST1; leading to the recruitment of SPART to midbodies. Interacts with MAP1LC3A and MAP1LC3C. In terms of processing, ubiquitinated; ubiquitination does not require ITCH and WWP1. In terms of tissue distribution, ubiquitously expressed, with highest levels of expression detected in adipose tissue.

Its subcellular location is the cytoplasm. It is found in the midbody. It localises to the lipid droplet. Its function is as follows. Lipophagy receptor that plays an important role in lipid droplet (LD) turnover in motor neurons. Localizes to LDs and interacts with components of the autophagy machinery, such as MAP1LC3A/C proteins to deliver LDs to autophagosomes for degradation via lipophagy. Lipid transfer protein required for lipid droplet degradation, including by lipophagy. Can bind and transfer all lipid species found in lipid droplets, from phospholipids to triglycerides and sterol esters but the direction of lipid transfer by spartin and its cargos are unknown. May be implicated in endosomal trafficking, or microtubule dynamics, or both. Participates in cytokinesis. The sequence is that of Spartin from Homo sapiens (Human).